A 360-amino-acid chain; its full sequence is Peptide chain release factor 1 (360 aa).

Glutamine 237 carries the N5-methylglutamine modification.

It belongs to the prokaryotic/mitochondrial release factor family. Methylated by PrmC. Methylation increases the termination efficiency of RF1.

Its subcellular location is the cytoplasm. In terms of biological role, peptide chain release factor 1 directs the termination of translation in response to the peptide chain termination codons UAG and UAA. The polypeptide is Peptide chain release factor 1 (Ectopseudomonas mendocina (strain ymp) (Pseudomonas mendocina)).